The sequence spans 343 residues: Sorbitol dehydrogenase (343 aa).

Residues 1-26 (MKALVKTQHGTGHFAVQEKPEPTPGK) form a disordered region. 3 residues coordinate Zn(2+): Cys39, His60, and Glu61. Position 146 (Glu146) interacts with substrate. Residues Ile174, Arg200, and 262-264 (VGL) each bind NAD(+).

Belongs to the zinc-containing alcohol dehydrogenase family. In terms of assembly, homotetramer. Zn(2+) serves as cofactor.

It carries out the reaction keto-D-fructose + NADH + H(+) = D-sorbitol + NAD(+). The catalysed reaction is xylitol + NAD(+) = D-xylulose + NADH + H(+). The enzyme catalyses L-iditol + NAD(+) = keto-L-sorbose + NADH + H(+). Functionally, polyol dehydrogenase that catalyzes the NAD(+)-dependent oxidation of various sugar alcohols. Is active with D-sorbitol (D-glucitol), xylitol and L-iditol as substrates, leading to the C2-oxidized products D-fructose, D-xylulose and L-sorbose, respectively. The protein is Sorbitol dehydrogenase (gutB) of Halalkalibacterium halodurans (strain ATCC BAA-125 / DSM 18197 / FERM 7344 / JCM 9153 / C-125) (Bacillus halodurans).